Reading from the N-terminus, the 340-residue chain is Phosphoribosylformylglycinamidine cyclo-ligase (340 aa).

Belongs to the AIR synthase family.

It is found in the cytoplasm. It carries out the reaction 2-formamido-N(1)-(5-O-phospho-beta-D-ribosyl)acetamidine + ATP = 5-amino-1-(5-phospho-beta-D-ribosyl)imidazole + ADP + phosphate + H(+). It participates in purine metabolism; IMP biosynthesis via de novo pathway; 5-amino-1-(5-phospho-D-ribosyl)imidazole from N(2)-formyl-N(1)-(5-phospho-D-ribosyl)glycinamide: step 2/2. In Acetivibrio thermocellus (strain ATCC 27405 / DSM 1237 / JCM 9322 / NBRC 103400 / NCIMB 10682 / NRRL B-4536 / VPI 7372) (Clostridium thermocellum), this protein is Phosphoribosylformylglycinamidine cyclo-ligase.